Reading from the N-terminus, the 526-residue chain is Amine oxidase [flavin-containing] A (526 aa).

N-acetylmethionine is present on Met1. Topologically, residues 1-497 (MTDLEKPSIT…HTFLERNLPS (497 aa)) are cytoplasmic. Ser383 is modified (phosphoserine). Cys406 bears the S-8alpha-FAD cysteine mark. A helical; Anchor for type IV membrane protein membrane pass occupies residues 498 to 518 (VPGLLKITGFSTSVALLCFVL). Residues 519–526 (YKFKQPQS) are Mitochondrial intermembrane-facing. The segment at 520–522 (KFK) is interaction with membrane phospholipid headgroups.

It belongs to the flavin monoamine oxidase family. Monomer, homo- or heterodimer (containing two subunits of similar size). Each subunit contains a covalently bound flavin. Enzymatically active as monomer. FAD is required as a cofactor.

The protein localises to the mitochondrion outer membrane. The enzyme catalyses a secondary aliphatic amine + O2 + H2O = a primary amine + an aldehyde + H2O2. It carries out the reaction a primary methyl amine + O2 + H2O = an aldehyde + H2O2 + NH4(+). It catalyses the reaction serotonin + O2 + H2O = (5-hydroxyindol-3-yl)acetaldehyde + H2O2 + NH4(+). The catalysed reaction is (R)-adrenaline + O2 + H2O = (R)-3,4-dihydroxymandelaldehyde + methylamine + H2O2. The enzyme catalyses dopamine + O2 + H2O = 3,4-dihydroxyphenylacetaldehyde + H2O2 + NH4(+). It carries out the reaction tyramine + O2 + H2O = (4-hydroxyphenyl)acetaldehyde + H2O2 + NH4(+). It catalyses the reaction (R)-noradrenaline + O2 + H2O = (R)-3,4-dihydroxymandelaldehyde + H2O2 + NH4(+). The catalysed reaction is kynuramine + O2 + H2O = 3-(2-aminophenyl)-3-oxopropanal + H2O2 + NH4(+). The enzyme catalyses tryptamine + O2 + H2O = indole-3-acetaldehyde + H2O2 + NH4(+). It carries out the reaction 2-phenylethylamine + O2 + H2O = 2-phenylacetaldehyde + H2O2 + NH4(+). Catalyzes the oxidative deamination of biogenic and xenobiotic amines and has important functions in the metabolism of neuroactive and vasoactive amines in the central nervous system and peripheral tissues. Preferentially oxidizes serotonin. Also catalyzes the oxidative deamination of kynuramine to 3-(2-aminophenyl)-3-oxopropanal that can spontaneously condense to 4-hydroxyquinoline. The polypeptide is Amine oxidase [flavin-containing] A (Mus musculus (Mouse)).